Reading from the N-terminus, the 461-residue chain is Cysteine--tRNA ligase (461 aa).

Cys28 contacts Zn(2+). The 'HIGH' region motif lies at 30 to 40 (ITVYDLCHIGH). Zn(2+) is bound by residues Cys209, His234, and Glu238. The 'KMSKS' region motif lies at 266–270 (KMSKS). Lys269 contacts ATP.

Belongs to the class-I aminoacyl-tRNA synthetase family. Monomer. It depends on Zn(2+) as a cofactor.

The protein localises to the cytoplasm. It carries out the reaction tRNA(Cys) + L-cysteine + ATP = L-cysteinyl-tRNA(Cys) + AMP + diphosphate. The polypeptide is Cysteine--tRNA ligase (Cronobacter sakazakii (strain ATCC BAA-894) (Enterobacter sakazakii)).